Consider the following 621-residue polypeptide: Chaperone protein HtpG (621 aa).

The tract at residues 1 to 328 is a; substrate-binding; the sequence is MKQEKKKFDA…SEDLPLNISR (328 aa). The b stretch occupies residues 329–544; it reads ESLQHNNVLE…EAAMDIRMER (216 aa). The disordered stretch occupies residues 478–498; sequence DVDQATSSSEEKNKDDKKSDD. Residues 486-498 are compositionally biased toward basic and acidic residues; that stretch reads SEEKNKDDKKSDD. The tract at residues 545–621 is c; that stretch reads FLIEQKQIAN…LNDIVQKAIL (77 aa).

The protein belongs to the heat shock protein 90 family. As to quaternary structure, homodimer.

The protein resides in the cytoplasm. In terms of biological role, molecular chaperone. Has ATPase activity. The chain is Chaperone protein HtpG from Rickettsia bellii (strain RML369-C).